Here is a 207-residue protein sequence, read N- to C-terminus: Thiamine-phosphate synthase (207 aa).

4-amino-2-methyl-5-(diphosphooxymethyl)pyrimidine-binding positions include 37–41 and Asn-69; that span reads QLREK. Asp-70 and Asp-89 together coordinate Mg(2+). A 4-amino-2-methyl-5-(diphosphooxymethyl)pyrimidine-binding site is contributed by Ser-108. 134–136 serves as a coordination point for 2-[(2R,5Z)-2-carboxy-4-methylthiazol-5(2H)-ylidene]ethyl phosphate; that stretch reads TGS. Lys-137 lines the 4-amino-2-methyl-5-(diphosphooxymethyl)pyrimidine pocket. 2-[(2R,5Z)-2-carboxy-4-methylthiazol-5(2H)-ylidene]ethyl phosphate-binding positions include Gly-165 and 185–186; that span reads IS.

Belongs to the thiamine-phosphate synthase family. Mg(2+) serves as cofactor.

It carries out the reaction 2-[(2R,5Z)-2-carboxy-4-methylthiazol-5(2H)-ylidene]ethyl phosphate + 4-amino-2-methyl-5-(diphosphooxymethyl)pyrimidine + 2 H(+) = thiamine phosphate + CO2 + diphosphate. The enzyme catalyses 2-(2-carboxy-4-methylthiazol-5-yl)ethyl phosphate + 4-amino-2-methyl-5-(diphosphooxymethyl)pyrimidine + 2 H(+) = thiamine phosphate + CO2 + diphosphate. It catalyses the reaction 4-methyl-5-(2-phosphooxyethyl)-thiazole + 4-amino-2-methyl-5-(diphosphooxymethyl)pyrimidine + H(+) = thiamine phosphate + diphosphate. Its pathway is cofactor biosynthesis; thiamine diphosphate biosynthesis; thiamine phosphate from 4-amino-2-methyl-5-diphosphomethylpyrimidine and 4-methyl-5-(2-phosphoethyl)-thiazole: step 1/1. Functionally, condenses 4-methyl-5-(beta-hydroxyethyl)thiazole monophosphate (THZ-P) and 2-methyl-4-amino-5-hydroxymethyl pyrimidine pyrophosphate (HMP-PP) to form thiamine monophosphate (TMP). In Desulfitobacterium hafniense (strain Y51), this protein is Thiamine-phosphate synthase.